The following is a 400-amino-acid chain: Argininosuccinate synthase (400 aa).

Residues A10–S18 and A38 contribute to the ATP site. Y89 contacts L-citrulline. ATP is bound at residue G119. 3 residues coordinate L-aspartate: T121, N125, and D126. N125 provides a ligand contact to L-citrulline. R129, S177, S186, E262, and Y274 together coordinate L-citrulline.

The protein belongs to the argininosuccinate synthase family. Type 1 subfamily. Homotetramer.

It is found in the cytoplasm. It carries out the reaction L-citrulline + L-aspartate + ATP = 2-(N(omega)-L-arginino)succinate + AMP + diphosphate + H(+). It functions in the pathway amino-acid biosynthesis; L-arginine biosynthesis; L-arginine from L-ornithine and carbamoyl phosphate: step 2/3. This is Argininosuccinate synthase from Synechococcus elongatus (strain ATCC 33912 / PCC 7942 / FACHB-805) (Anacystis nidulans R2).